Consider the following 453-residue polypeptide: Allantoinase (453 aa).

Zn(2+) is bound by residues histidine 59, histidine 61, lysine 146, histidine 186, histidine 242, and aspartate 315. Lysine 146 carries the post-translational modification N6-carboxylysine.

Belongs to the metallo-dependent hydrolases superfamily. Allantoinase family. In terms of assembly, homotetramer. The cofactor is Zn(2+). In terms of processing, carboxylation allows a single lysine to coordinate two zinc ions.

It catalyses the reaction (S)-allantoin + H2O = allantoate + H(+). The protein operates within nitrogen metabolism; (S)-allantoin degradation; allantoate from (S)-allantoin: step 1/1. In terms of biological role, catalyzes the conversion of allantoin (5-ureidohydantoin) to allantoic acid by hydrolytic cleavage of the five-member hydantoin ring. This is Allantoinase from Escherichia coli O127:H6 (strain E2348/69 / EPEC).